The sequence spans 438 residues: Indole diterpene prenyltransferase paxD (438 aa).

80 to 81 lines the L-tryptophan pocket; sequence FM. Positions 102, 190, 264, 266, 268, 349, and 418 each coordinate substrate.

The protein belongs to the tryptophan dimethylallyltransferase family.

It functions in the pathway secondary metabolite biosynthesis. In terms of biological role, indole diterpene prenyltransferase; part of the gene cluster that mediates the biosynthesis of paxilline, a mycotoxin that acts as an inhibitor of mammalian maxi-K channels. PaxG, the geranylgeranyl diphosphate (GGPP) synthase is proposed to catalyze the first step in paxilline biosynthesis. Condensation of indole-3-glycerol phosphate with GGPP by paxC then forms 3-geranylgeranylindole (3-GGI), followed by epoxidation and cyclization of this intermediate (by paxM and paxB) to form paspaline. Paspaline is subsequently converted to 13-desoxypaxilline by paxP, the latter being then converted to paxilline by paxQ. Finally paxilline can be mono- and di-prenylated by paxD. In Penicillium paxilli, this protein is Indole diterpene prenyltransferase paxD.